The primary structure comprises 549 residues: Glucose-6-phosphate isomerase (549 aa).

N6-acetyllysine is present on residues Lys-80, Lys-228, and Lys-234. Glu-355 acts as the Proton donor in catalysis. Active-site residues include His-386 and Lys-514.

It belongs to the GPI family.

The protein localises to the cytoplasm. The catalysed reaction is alpha-D-glucose 6-phosphate = beta-D-fructose 6-phosphate. Its pathway is carbohydrate biosynthesis; gluconeogenesis. The protein operates within carbohydrate degradation; glycolysis; D-glyceraldehyde 3-phosphate and glycerone phosphate from D-glucose: step 2/4. Catalyzes the reversible isomerization of glucose-6-phosphate to fructose-6-phosphate. This chain is Glucose-6-phosphate isomerase, found in Shigella flexneri serotype 5b (strain 8401).